The chain runs to 207 residues: Outer-membrane lipoprotein LolB (207 aa).

A signal peptide spans 1–21; that stretch reads MTLPDFRLIRLLPLASLVLTA. Cysteine 22 carries N-palmitoyl cysteine lipidation. Residue cysteine 22 is the site of S-diacylglycerol cysteine attachment.

The protein belongs to the LolB family. In terms of assembly, monomer.

It localises to the cell outer membrane. Plays a critical role in the incorporation of lipoproteins in the outer membrane after they are released by the LolA protein. The protein is Outer-membrane lipoprotein LolB of Salmonella typhi.